The chain runs to 143 residues: MFIGEYNHSIDSKGRLSVPSRFREELGDRFILTKGLDNCLFVYSMDEWKVLEDKLKKLPLTNRDARAFVRFFFSGATECELDNQGRIRIPNNLRSHAYLEKEVIVIGVATRIEIWSSDQWGQYNDDSNLSYDEIANRMEELGI.

SpoVT-AbrB domains are found at residues 5–47 and 76–119; these read EYNH…SMDE and ATEC…SSDQ.

Belongs to the MraZ family. As to quaternary structure, forms oligomers.

The protein resides in the cytoplasm. It is found in the nucleoid. The protein is Transcriptional regulator MraZ of Alkaliphilus metalliredigens (strain QYMF).